The following is a 318-amino-acid chain: Thymidylate synthase (318 aa).

Residues arginine 25 and 180–181 (RR) each bind dUMP. Catalysis depends on cysteine 200, which acts as the Nucleophile. Residues 220 to 223 (RSGD), asparagine 231, and 261 to 263 (HIY) each bind dUMP. Residue aspartate 223 participates in (6R)-5,10-methylene-5,6,7,8-tetrahydrofolate binding. Alanine 317 contributes to the (6R)-5,10-methylene-5,6,7,8-tetrahydrofolate binding site.

This sequence belongs to the thymidylate synthase family. Bacterial-type ThyA subfamily. Homodimer.

Its subcellular location is the cytoplasm. It carries out the reaction dUMP + (6R)-5,10-methylene-5,6,7,8-tetrahydrofolate = 7,8-dihydrofolate + dTMP. It functions in the pathway pyrimidine metabolism; dTTP biosynthesis. Its function is as follows. Catalyzes the reductive methylation of 2'-deoxyuridine-5'-monophosphate (dUMP) to 2'-deoxythymidine-5'-monophosphate (dTMP) while utilizing 5,10-methylenetetrahydrofolate (mTHF) as the methyl donor and reductant in the reaction, yielding dihydrofolate (DHF) as a by-product. This enzymatic reaction provides an intracellular de novo source of dTMP, an essential precursor for DNA biosynthesis. This Bacillus cereus (strain ATCC 14579 / DSM 31 / CCUG 7414 / JCM 2152 / NBRC 15305 / NCIMB 9373 / NCTC 2599 / NRRL B-3711) protein is Thymidylate synthase.